We begin with the raw amino-acid sequence, 42 residues long: Potassium channel toxin gamma-KTx 1.3 (42 aa).

Intrachain disulfides connect C5–C23, C11–C34, C20–C39, and C24–C41.

It belongs to the ergtoxin family. Gamma-KTx 1 subfamily. In terms of tissue distribution, expressed by the venom gland.

It is found in the secreted. In terms of biological role, blocks Kv11/ERG potassium channels. The sequence is that of Potassium channel toxin gamma-KTx 1.3 from Centruroides gracilis (Slenderbrown scorpion).